We begin with the raw amino-acid sequence, 88 residues long: Protein alpha-1 (88 aa).

Residues 38–58 traverse the membrane as a helical segment; the sequence is GFWIILIILLGILAIRIAIKV.

The protein resides in the membrane. This Bos taurus (Bovine) protein is Protein alpha-1 (alpha).